The sequence spans 702 residues: Polyribonucleotide nucleotidyltransferase (702 aa).

Residues Asp491 and Asp497 each coordinate Mg(2+). Residues 558–618 (PKMKTFMIPV…TAIEKAYQLI (61 aa)) form the KH domain. Residues 628 to 696 (GEKIIGPVVK…GKGKIKLQLI (69 aa)) enclose the S1 motif domain.

This sequence belongs to the polyribonucleotide nucleotidyltransferase family. The cofactor is Mg(2+).

It is found in the cytoplasm. It catalyses the reaction RNA(n+1) + phosphate = RNA(n) + a ribonucleoside 5'-diphosphate. Functionally, involved in mRNA degradation. Catalyzes the phosphorolysis of single-stranded polyribonucleotides processively in the 3'- to 5'-direction. The protein is Polyribonucleotide nucleotidyltransferase of Spiroplasma citri.